We begin with the raw amino-acid sequence, 642 residues long: Threonine--tRNA ligase (642 aa).

Residues 1–61 form the TGS domain; sequence MPIITLPDGS…TADSELAIIT (61 aa). The catalytic stretch occupies residues 243-534; it reads DHRKIGKQLD…LIEEYAGKFP (292 aa). Zn(2+)-binding residues include cysteine 334, histidine 385, and histidine 511.

The protein belongs to the class-II aminoacyl-tRNA synthetase family. As to quaternary structure, homodimer. It depends on Zn(2+) as a cofactor.

The protein resides in the cytoplasm. It catalyses the reaction tRNA(Thr) + L-threonine + ATP = L-threonyl-tRNA(Thr) + AMP + diphosphate + H(+). Catalyzes the attachment of threonine to tRNA(Thr) in a two-step reaction: L-threonine is first activated by ATP to form Thr-AMP and then transferred to the acceptor end of tRNA(Thr). Also edits incorrectly charged L-seryl-tRNA(Thr). In Shewanella frigidimarina (strain NCIMB 400), this protein is Threonine--tRNA ligase.